The chain runs to 276 residues: Formamidopyrimidine-DNA glycosylase (276 aa).

Pro-2 (schiff-base intermediate with DNA) is an active-site residue. The active-site Proton donor is the Glu-3. Lys-60 functions as the Proton donor; for beta-elimination activity in the catalytic mechanism. The DNA site is built by His-93 and Arg-112. The FPG-type zinc-finger motif lies at 240–274; the sequence is NVYGKKGEPCVTCGTILEKTVVGGRGTHYCPICQP. The Proton donor; for delta-elimination activity role is filled by Arg-264.

It belongs to the FPG family. Monomer. Zn(2+) serves as cofactor.

The enzyme catalyses Hydrolysis of DNA containing ring-opened 7-methylguanine residues, releasing 2,6-diamino-4-hydroxy-5-(N-methyl)formamidopyrimidine.. It carries out the reaction 2'-deoxyribonucleotide-(2'-deoxyribose 5'-phosphate)-2'-deoxyribonucleotide-DNA = a 3'-end 2'-deoxyribonucleotide-(2,3-dehydro-2,3-deoxyribose 5'-phosphate)-DNA + a 5'-end 5'-phospho-2'-deoxyribonucleoside-DNA + H(+). In terms of biological role, involved in base excision repair of DNA damaged by oxidation or by mutagenic agents. Acts as a DNA glycosylase that recognizes and removes damaged bases. Has a preference for oxidized purines, such as 7,8-dihydro-8-oxoguanine (8-oxoG). Has AP (apurinic/apyrimidinic) lyase activity and introduces nicks in the DNA strand. Cleaves the DNA backbone by beta-delta elimination to generate a single-strand break at the site of the removed base with both 3'- and 5'-phosphates. The polypeptide is Formamidopyrimidine-DNA glycosylase (Bacillus anthracis).